The chain runs to 102 residues: Small ribosomal subunit protein uS10 (102 aa).

It belongs to the universal ribosomal protein uS10 family. Part of the 30S ribosomal subunit.

Functionally, involved in the binding of tRNA to the ribosomes. In Myxococcus xanthus (strain DK1622), this protein is Small ribosomal subunit protein uS10.